The chain runs to 2209 residues: Orsellinic acid synthase armB (2209 aa).

The interval 38–261 is N-terminal acylcarrier protein transacylase domain (SAT); the sequence is LLLDACYYAF…HKTTVDALYH (224 aa). In terms of domain architecture, Ketosynthase family 3 (KS3) spans 391–817; it reads QEPIAICGMS…GSNGALLLEE (427 aa). Residues Cys-561, His-696, and His-736 each act as for beta-ketoacyl synthase activity in the active site. Residues 914–1239 form a malonyl-CoA:ACP transacylase (MAT) domain region; sequence VFVFSGQGGQ…NLTLSSSLSQ (326 aa). Residue Ser-1008 is the For acyl/malonyl transferase activity of the active site. The segment at 1306-1436 is N-terminal hotdog fold; the sequence is MLQSWAQFPS…GQFRPLLVAD (131 aa). The PKS/mFAS DH domain occupies 1306–1613; that stretch reads MLQSWAQFPS…FKKLRLNTLQ (308 aa). A product template (PT) domain region spans residues 1335-1610; the sequence is ITGHIVGDVP…GMCFKKLRLN (276 aa). Residue His-1338 is the Proton acceptor; for dehydratase activity of the active site. The interval 1463–1613 is C-terminal hotdog fold; the sequence is AEVITTRTAY…FKKLRLNTLQ (151 aa). The active-site Proton donor; for dehydratase activity is the Asp-1524. 2 consecutive Carrier domains span residues 1659–1734 and 1844–1921; these read VDVQ…SSTI and SSSS…SSKQ. Residues Ser-1693 and Ser-1881 each carry the O-(pantetheine 4'-phosphoryl)serine modification. The segment at 1917-1945 is disordered; sequence ISSKQPGKSPKPSEEATMDPDKEEDLSDL. Residues 1932 to 1943 show a composition bias toward acidic residues; that stretch reads ATMDPDKEEDLS. A thioesterase (TE) domain region spans residues 1962-2201; sequence VPMSVQKSSS…LGAVTQALVD (240 aa).

It catalyses the reaction 3 malonyl-CoA + acetyl-CoA + 2 H(+) = orsellinate + 3 CO2 + 4 CoA. It functions in the pathway secondary metabolite biosynthesis. Non-reducing polyketide synthase, part of the gene cluster that mediates the biosynthesis of melleolides, a range of antifungal and phytotoxic polyketide derivatives composed of an orsellinic acid (OA) moiety esterified to various sesquiterpene alcohols. The first step in melleolides biosynthesis is performed by the delta(6)-protoilludene synthase PRO1 which catalyzes the cyclization of farnesyl diphosphate to protoilludene. The orsellinic acid synthase armB produces OA by condensing acetyl-CoA with 3 malonyl-CoA units in a three-round chain elongation reaction folowed by a C2-C7 ring closure. ArmB further catalyzes the trans-esterification of OA to the various sesquiterpene alcohols resulting from the hydroxylation of protoilludene. The melleolides cluster also includes 5 cytochrome P450 monooxygenases, 4 NAD(+)-dependent oxidoreductases, one flavin-dependent oxidoreductase, and one O-methyltransferase. The cytochrome P450 monooxygenases may be involved in protoilludene hydroxylation to elaborate melleolides with multiple alcohol groups, such as melleolide D, which carries alcohol functionalities at C-4, C-5, C-10, and C-13. The role of the NAD(+)-dependent enzymes remains unknown. Numerous melleolides, including arnamial, show 5'-O-methylation of the aromatic moiety which may be catalyzed by the methyltransferase encoded in the cluster. The flavin-dependent oxidoreductase might represent the dehydrogenase yielding the aldehyde in position 1 of arnamial and other melleolides. Finally, several halogenase localized outside of the cluster (armH1 to armH5), are able to catalyze the transfer of a single chlorine atom to the melleolide backbone, resulting in a 6'-chloromelleolide product. The protein is Orsellinic acid synthase armB of Armillaria mellea (Honey mushroom).